The sequence spans 591 residues: Paralemmin-3 (591 aa).

4 repeats span residues 171-174 (EKNK), 183-186 (EKNQ), 224-227 (EKNQ), and 234-237 (KNQD). Residues 282-293 (DQTQSTSDQNME) are compositionally biased toward polar residues. Disordered stretches follow at residues 282–317 (DQTQ…TKDQ), 332–413 (KGTT…QNQD), and 515–591 (PDLK…CVVM). Composition is skewed to basic and acidic residues over residues 306-317 (SQSEGKIQTKDQ) and 349-383 (EPKE…DMDP). Polar residues-rich tracts occupy residues 385–413 (QLST…QNQD) and 528–542 (QESS…TIAQ). Low complexity predominate over residues 543–554 (SSSAEGNSSPES). The span at 559 to 575 (QKSQGTDSQQGGNTATQ) shows a compositional bias: polar residues. A Nuclear localization signal motif is present at residues 579 to 583 (RRKKK). S-palmitoyl cysteine attachment occurs at residues Cys585 and Cys587. The residue at position 588 (Cys588) is a Cysteine methyl ester. Cys588 is lipidated: S-farnesyl cysteine. A propeptide spans 589–591 (VVM) (removed in mature form).

The protein belongs to the paralemmin family. May be phosphorylated during oocyte maturation. Post-translationally, palmitoylated on Cys-585 and Cys-587 and prenylated on Cys-588; which is required for membrane association. As to expression, in Xenopus oocyte, in the central nervous system cells of tadpoles and adult frogs, and transiently in epithelial cells of stomach and gut of tadpoles. Highly expressed in kidney.

It is found in the cytoplasm. The protein resides in the nucleus. The protein localises to the cell membrane. Its function is as follows. Maternal ATP-binding protein that may have multiple functions during development, one of which may be associated with the development and maintenance of the central nervous system. This chain is Paralemmin-3 (palm3), found in Xenopus laevis (African clawed frog).